A 395-amino-acid chain; its full sequence is Cuticlin-5 (395 aa).

The signal sequence occupies residues 1–18 (MNFILAVFAIILLQAVRG). Residues 19 to 358 (EIDNAIVGDP…ELCMTAIGTT (340 aa)) lie on the Extracellular side of the membrane. The ZP domain occupies 46-291 (SCVGNFIIKV…DYCDVPSCPD (246 aa)). Asn90 and Asn307 each carry an N-linked (GlcNAc...) asparagine glycan. A helical membrane pass occupies residues 359-379 (LLVFLNAFLFIISLVSIVHVC). Residues 380–395 (CFRTSPKLEKTKSTML) are Cytoplasmic-facing.

It localises to the cell membrane. Its function is as follows. Plays a role in alae formation in L1 and dauer stage larvae. The polypeptide is Cuticlin-5 (Caenorhabditis elegans).